The following is an 833-amino-acid chain: Capsid-associated protein Vp91 (833 aa).

A signal peptide spans 1–18; the sequence is MSGVVLLVLAIILITIFS. N-linked (GlcNAc...) asparagine; by host glycans are attached at residues asparagine 137, asparagine 180, asparagine 199, and asparagine 210. The segment at 147–196 adopts a C2HC BV-type zinc-finger fold; sequence CVPEDPCSGRPPGRYPMNELLLDTLVHNQHSDKNYSAGAHLYHPTLYLRC. Cystine bridges form between cysteine 207–cysteine 220 and cysteine 260–cysteine 273. The Chitin-binding type-2 domain occupies 223–281; that stretch reads NELCEGRPDGFVLPYFPEALLVNEFVECRNGEHVVAQCADGQVFDRALMTCVHAHPCAF. N-linked (GlcNAc...) asparagine; by host glycosylation is found at asparagine 408, asparagine 413, asparagine 588, and asparagine 609. The segment at 647–673 is disordered; it reads EPGGDGDHWAPEVPPTQPEPELEPESE.

Its subcellular location is the virion. In terms of biological role, probable capsid-associated protein. This chain is Capsid-associated protein Vp91, found in Choristoneura fumiferana nuclear polyhedrosis virus (CfMNPV).